Here is a 578-residue protein sequence, read N- to C-terminus: 65-kDa microtubule-associated protein 2 (578 aa).

Coiled-coil stretches lie at residues 64–84 (AELL…TTAL), 151–184 (DETD…VLEF), 235–257 (TLKE…LTDL), 290–312 (ALAL…LKSS), and 461–489 (AMLD…QQEQ). Residues 473-494 (REDEKRRLKEQKKQQEQPHTDQ) are compositionally biased toward basic and acidic residues. A disordered region spans residues 473–578 (REDEKRRLKE…SRADPVMASP (106 aa)). Residues S503 and S532 each carry the phosphoserine modification. Residues 549 to 558 (KIASPSNIVA) show a composition bias toward polar residues. Phosphoserine is present on residues S566, S569, and S577.

Belongs to the MAP65/ASE1 family. As to quaternary structure, forms a dimer. Binds to microtubules (MT). Bundles polymerized MT via the formation of 25-nm crossbridges with centrally located endocytic MT.

It localises to the nucleus. It is found in the cytoplasm. Its subcellular location is the cytoskeleton. The protein localises to the spindle pole. The protein resides in the phragmoplast. In terms of biological role, microtubule-associated protein that stabilize microtubules (MT). Involved in the regulation of MT organization and dynamics. Confers MT resistance to the drug propyzamide and cold conditions. This is 65-kDa microtubule-associated protein 2 (MAP65-2) from Arabidopsis thaliana (Mouse-ear cress).